Consider the following 482-residue polypeptide: O-phosphoseryl-tRNA(Sec) selenium transferase (482 aa).

Residues 1-36 (MKSSFGKKEGEYSRLVSKSSNKLLNSLWEKKQIPEE) are tetramerization. Arg69 is a pyridoxal 5'-phosphate binding site. Residues 90–100 (GRSGNLLEIQP) form a phosphate loop (P-loop) region. Residues Arg91, Ser92, and Gln99 each contribute to the substrate site. Lys277 carries the post-translational modification N6-(pyridoxal phosphate)lysine. Arg306 serves as a coordination point for substrate. Arg388 contributes to the tRNA binding site. Positions 461-482 (DRRGGSSGRRVPMNESFDMEND) are disordered.

The protein belongs to the SepSecS family. Homotetramer formed by a catalytic dimer and a non-catalytic dimer serving as a binding platform that orients tRNASec for catalysis. Each tetramer binds the CCA ends of two tRNAs which point to the active sites of the catalytic dimer. Requires pyridoxal 5'-phosphate as cofactor.

It localises to the cytoplasm. It catalyses the reaction O-phospho-L-seryl-tRNA(Sec) + selenophosphate + H2O = L-selenocysteinyl-tRNA(Sec) + 2 phosphate. It participates in aminoacyl-tRNA biosynthesis; selenocysteinyl-tRNA(Sec) biosynthesis; selenocysteinyl-tRNA(Sec) from L-seryl-tRNA(Sec) (archaeal/eukaryal route): step 2/2. Its function is as follows. Converts O-phosphoseryl-tRNA(Sec) to selenocysteinyl-tRNA(Sec) required for selenoprotein biosynthesis. This Caenorhabditis briggsae protein is O-phosphoseryl-tRNA(Sec) selenium transferase (secs-1).